The primary structure comprises 450 residues: 23S rRNA (uracil(1939)-C(5))-methyltransferase RlmD (450 aa).

A TRAM domain is found at 12 to 70; the sequence is SKQLSAKLSLSVNQLDHLGAGIAQHQGKVVFIPGALPDETVTVQLTEQKKNYARAKLIK. [4Fe-4S] cluster contacts are provided by C83, C89, C92, and C171. S-adenosyl-L-methionine is bound by residues Q283, F312, N317, E333, D360, and D380. The Nucleophile role is filled by C406.

The protein belongs to the class I-like SAM-binding methyltransferase superfamily. RNA M5U methyltransferase family. RlmD subfamily.

It carries out the reaction uridine(1939) in 23S rRNA + S-adenosyl-L-methionine = 5-methyluridine(1939) in 23S rRNA + S-adenosyl-L-homocysteine + H(+). Its function is as follows. Catalyzes the formation of 5-methyl-uridine at position 1939 (m5U1939) in 23S rRNA. This Shewanella baltica (strain OS223) protein is 23S rRNA (uracil(1939)-C(5))-methyltransferase RlmD.